A 504-amino-acid polypeptide reads, in one-letter code: Bifunctional purine biosynthesis protein PurH (504 aa).

The MGS-like domain occupies 1-144 (MRKRALISVY…KSFKNVVVIS (144 aa)).

The protein belongs to the PurH family.

It catalyses the reaction (6R)-10-formyltetrahydrofolate + 5-amino-1-(5-phospho-beta-D-ribosyl)imidazole-4-carboxamide = 5-formamido-1-(5-phospho-D-ribosyl)imidazole-4-carboxamide + (6S)-5,6,7,8-tetrahydrofolate. The catalysed reaction is IMP + H2O = 5-formamido-1-(5-phospho-D-ribosyl)imidazole-4-carboxamide. It participates in purine metabolism; IMP biosynthesis via de novo pathway; 5-formamido-1-(5-phospho-D-ribosyl)imidazole-4-carboxamide from 5-amino-1-(5-phospho-D-ribosyl)imidazole-4-carboxamide (10-formyl THF route): step 1/1. It functions in the pathway purine metabolism; IMP biosynthesis via de novo pathway; IMP from 5-formamido-1-(5-phospho-D-ribosyl)imidazole-4-carboxamide: step 1/1. The polypeptide is Bifunctional purine biosynthesis protein PurH (Fusobacterium nucleatum subsp. nucleatum (strain ATCC 25586 / DSM 15643 / BCRC 10681 / CIP 101130 / JCM 8532 / KCTC 2640 / LMG 13131 / VPI 4355)).